The following is a 297-amino-acid chain: ClpXP adapter protein SpxH (297 aa).

Belongs to the SpxH family. Interacts with Spx.

It is found in the cytoplasm. Adapter protein required for efficient degradation of Spx by ClpXP under non-stress conditions. Interaction with Spx stabilizes Spx and exposes the C-terminus of Spx for recognition and proteolysis by ClpXP. This is ClpXP adapter protein SpxH from Bacillus cereus (strain ATCC 10987 / NRS 248).